A 315-amino-acid chain; its full sequence is Ribosomal RNA small subunit methyltransferase H (315 aa).

Residues 32–34 (GGH), aspartate 52, phenylalanine 78, aspartate 100, and glutamine 107 contribute to the S-adenosyl-L-methionine site.

This sequence belongs to the methyltransferase superfamily. RsmH family.

It is found in the cytoplasm. It catalyses the reaction cytidine(1402) in 16S rRNA + S-adenosyl-L-methionine = N(4)-methylcytidine(1402) in 16S rRNA + S-adenosyl-L-homocysteine + H(+). Its function is as follows. Specifically methylates the N4 position of cytidine in position 1402 (C1402) of 16S rRNA. The polypeptide is Ribosomal RNA small subunit methyltransferase H (Psychromonas ingrahamii (strain DSM 17664 / CCUG 51855 / 37)).